Here is a 385-residue protein sequence, read N- to C-terminus: Glycine/sarcosine/betaine reductase complex component C subunit alpha (385 aa).

Cys359 is an active-site residue.

Heterooctamer of four alpha and four beta subunits. Component of the glycine, sarcosine and betaine reductase complexes, together with proteins A and B.

The enzyme catalyses acetyl phosphate + [thioredoxin]-disulfide + NH4(+) + H2O = [thioredoxin]-dithiol + glycine + phosphate + H(+). The catalysed reaction is acetyl phosphate + methylamine + [thioredoxin]-disulfide + H2O = sarcosine + [thioredoxin]-dithiol + phosphate + H(+). It catalyses the reaction acetyl phosphate + trimethylamine + [thioredoxin]-disulfide + H2O = glycine betaine + [thioredoxin]-dithiol + phosphate + H(+). Functionally, in the first step of glycine, betaine and sarcosine reductases, the substrate is bound to component PB via a Schiff base intermediate. Then the PB-activated substrate is nucleophilically attacked by the selenol anion of component PA to transform it to a carboxymethylated selenoether and the respective amine. By action of component PC, acetyl phosphate is formed, leaving component PA in its oxidized state. Finally component PA becomes reduced by the thioredoxin system to start a new catalytic cycle of reductive deamination. This chain is Glycine/sarcosine/betaine reductase complex component C subunit alpha (grdD), found in Peptoclostridium acidaminophilum (Eubacterium acidaminophilum).